The primary structure comprises 227 residues: Phosphoribosylformylglycinamidine synthase subunit PurQ (227 aa).

The region spanning 3–225 (FAVIVFPGSN…LKQWRETYVV (223 aa)) is the Glutamine amidotransferase type-1 domain. The active-site Nucleophile is C86. Residues H194 and E196 contribute to the active site.

Part of the FGAM synthase complex composed of 1 PurL, 1 PurQ and 2 PurS subunits.

It is found in the cytoplasm. The enzyme catalyses N(2)-formyl-N(1)-(5-phospho-beta-D-ribosyl)glycinamide + L-glutamine + ATP + H2O = 2-formamido-N(1)-(5-O-phospho-beta-D-ribosyl)acetamidine + L-glutamate + ADP + phosphate + H(+). It catalyses the reaction L-glutamine + H2O = L-glutamate + NH4(+). It functions in the pathway purine metabolism; IMP biosynthesis via de novo pathway; 5-amino-1-(5-phospho-D-ribosyl)imidazole from N(2)-formyl-N(1)-(5-phospho-D-ribosyl)glycinamide: step 1/2. Its function is as follows. Part of the phosphoribosylformylglycinamidine synthase complex involved in the purines biosynthetic pathway. Catalyzes the ATP-dependent conversion of formylglycinamide ribonucleotide (FGAR) and glutamine to yield formylglycinamidine ribonucleotide (FGAM) and glutamate. The FGAM synthase complex is composed of three subunits. PurQ produces an ammonia molecule by converting glutamine to glutamate. PurL transfers the ammonia molecule to FGAR to form FGAM in an ATP-dependent manner. PurS interacts with PurQ and PurL and is thought to assist in the transfer of the ammonia molecule from PurQ to PurL. The protein is Phosphoribosylformylglycinamidine synthase subunit PurQ of Bacillus cereus (strain 03BB102).